The sequence spans 413 residues: Inactive serine protease 35 (413 aa).

The signal sequence occupies residues 1 to 16 (MENMLLWLIFFTPGWT). An N-linked (GlcNAc...) asparagine glycan is attached at Asn-90. The 285-residue stretch at 124 to 408 (VYGTDSRFSI…ICLWIHGNDA (285 aa)) folds into the Peptidase S1 domain. Cys-154 and Cys-170 form a disulfide bridge. Basic residues predominate over residues 191-207 (MRNKSGGKKRRGSKRSR). Residues 191-250 (MRNKSGGKKRRGSKRSRREASGGDQREGTREHLRERAKGGRRRKKSGRGQRIAEGRPSFQ) are disordered. The segment covering 208–228 (REASGGDQREGTREHLRERAK) has biased composition (basic and acidic residues). The span at 229 to 238 (GGRRRKKSGR) shows a compositional bias: basic residues.

This sequence belongs to the peptidase S1 family.

Its subcellular location is the secreted. The chain is Inactive serine protease 35 (PRSS35) from Homo sapiens (Human).